Here is a 594-residue protein sequence, read N- to C-terminus: uncharacterized protein (594 aa).

The segment at residues 11–38 is a DNA-binding region (zn(2)-C6 fungal-type); sequence CELCRRKKIRCNRELPSCQNCIVYQEEC. Residues 503–523 traverse the membrane as a helical segment; sequence YLWVFLYCPFTPFLVLFSNIV.

It is found in the nucleus. Its subcellular location is the membrane. This is an uncharacterized protein from Schizosaccharomyces pombe (strain 972 / ATCC 24843) (Fission yeast).